The primary structure comprises 404 residues: S-adenosylmethionine synthase (404 aa).

Polar residues predominate over residues 1–13; it reads MSHSRYFFTSESV. Residues 1–20 are disordered; that stretch reads MSHSRYFFTSESVSEGHPDK. An ATP-binding site is contributed by histidine 17. Residue aspartate 19 coordinates Mg(2+). Position 45 (glutamate 45) interacts with K(+). Residues glutamate 58 and glutamine 101 each coordinate L-methionine. Positions 101 to 111 are flexible loop; that stretch reads QSPDINRGVDR. ATP is bound by residues 172–174, 246–247, aspartate 255, 261–262, alanine 278, and lysine 282; these read DSK, RF, and RK. L-methionine is bound at residue aspartate 255. Lysine 286 is an L-methionine binding site.

Belongs to the AdoMet synthase family. In terms of assembly, homotetramer; dimer of dimers. Mg(2+) is required as a cofactor. K(+) serves as cofactor.

Its subcellular location is the cytoplasm. It carries out the reaction L-methionine + ATP + H2O = S-adenosyl-L-methionine + phosphate + diphosphate. It participates in amino-acid biosynthesis; S-adenosyl-L-methionine biosynthesis; S-adenosyl-L-methionine from L-methionine: step 1/1. Catalyzes the formation of S-adenosylmethionine (AdoMet) from methionine and ATP. The overall synthetic reaction is composed of two sequential steps, AdoMet formation and the subsequent tripolyphosphate hydrolysis which occurs prior to release of AdoMet from the enzyme. In Chlorobaculum parvum (strain DSM 263 / NCIMB 8327) (Chlorobium vibrioforme subsp. thiosulfatophilum), this protein is S-adenosylmethionine synthase.